Here is a 218-residue protein sequence, read N- to C-terminus: Small ribosomal subunit protein uS3 (218 aa).

One can recognise a KH type-2 domain in the interval 38-107; the sequence is VREYIEKRLK…RVHVNVVEVK (70 aa).

It belongs to the universal ribosomal protein uS3 family. As to quaternary structure, part of the 30S ribosomal subunit. Forms a tight complex with proteins S10 and S14.

In terms of biological role, binds the lower part of the 30S subunit head. Binds mRNA in the 70S ribosome, positioning it for translation. In Exiguobacterium sibiricum (strain DSM 17290 / CCUG 55495 / CIP 109462 / JCM 13490 / 255-15), this protein is Small ribosomal subunit protein uS3.